We begin with the raw amino-acid sequence, 497 residues long: Aspartyl/glutamyl-tRNA(Asn/Gln) amidotransferase subunit B (497 aa).

Belongs to the GatB/GatE family. GatB subfamily. As to quaternary structure, heterotrimer of A, B and C subunits.

It carries out the reaction L-glutamyl-tRNA(Gln) + L-glutamine + ATP + H2O = L-glutaminyl-tRNA(Gln) + L-glutamate + ADP + phosphate + H(+). It catalyses the reaction L-aspartyl-tRNA(Asn) + L-glutamine + ATP + H2O = L-asparaginyl-tRNA(Asn) + L-glutamate + ADP + phosphate + 2 H(+). Its function is as follows. Allows the formation of correctly charged Asn-tRNA(Asn) or Gln-tRNA(Gln) through the transamidation of misacylated Asp-tRNA(Asn) or Glu-tRNA(Gln) in organisms which lack either or both of asparaginyl-tRNA or glutaminyl-tRNA synthetases. The reaction takes place in the presence of glutamine and ATP through an activated phospho-Asp-tRNA(Asn) or phospho-Glu-tRNA(Gln). The polypeptide is Aspartyl/glutamyl-tRNA(Asn/Gln) amidotransferase subunit B (Rhodopirellula baltica (strain DSM 10527 / NCIMB 13988 / SH1)).